The following is a 402-amino-acid chain: Peptidyl-prolyl cis-trans isomerase FKBP8 (402 aa).

The span at 28–39 (DGVDDAEEEDDL) shows a compositional bias: acidic residues. The segment at 28 to 54 (DGVDDAEEEDDLSGLPPLEDMGQPTVE) is disordered. Residues 110–194 (GQVVTVHLQM…CLEVTLKTAE (85 aa)) enclose the PPIase FKBP-type domain. One copy of the TPR 1 repeat lies at 211 to 244 (ANRKRECGNAHYQRADFVLAANSYDLAIKAITSN). Glycyl lysine isopeptide (Lys-Gly) (interchain with G-Cter in ubiquitin) cross-links involve residues K239, K261, K263, and K274. TPR repeat units lie at residues 262-295 (VKCL…QPDN) and 296-329 (IKAL…EPSN). A Phosphoserine modification is found at S286. Residues K297, K304, K324, K330, K338, K341, and K342 each participate in a glycyl lysine isopeptide (Lys-Gly) (interchain with G-Cter in ubiquitin) cross-link. Residues 380 to 400 (WLFGATAVALGGVALSVVIAA) form a helical membrane-spanning segment.

Homomultimers or heteromultimers (Potential). Forms heterodimer with calmodulin. When activated by calmodulin and calcium, interacts with the BH4 domain of BCL2 and weakly with BCLX isoform Bcl-X(L). Does not bind and inhibit calcineurin. Interacts with ZFYVE27; may negatively regulate ZFYVE27 phosphorylation. Ca(2+) is required as a cofactor. Post-translationally, ubiquitinated by PRKN during mitophagy, leading to its degradation and enhancement of mitophagy. Deubiquitinated by USP30. As to expression, detected throughout the embryonic body, in caudal neural tube, limbs and head. Detected in adult retina, brain, heart, kidney, liver, pancreas, lung, testis and urinary bladder (at protein level). Detected in adult brain, kidney, liver, testis and trigeminal nerve, and in embryo. Detected at lower levels in lung, spleen, heart and ovary. Widely expressed in forebrain. Detected in the Purkinje cell layer in the cerebellum and in hippocampus neurons.

The protein localises to the mitochondrion membrane. It carries out the reaction [protein]-peptidylproline (omega=180) = [protein]-peptidylproline (omega=0). Functionally, constitutively inactive PPiase, which becomes active when bound to calmodulin and calcium. Seems to act as a chaperone for BCL2, targets it to the mitochondria and modulates its phosphorylation state. The BCL2/FKBP8/calmodulin/calcium complex probably interferes with the binding of BCL2 to its targets. The active form of FKBP8 may therefore play a role in the regulation of apoptosis. Required for normal embryonic development. In Mus musculus (Mouse), this protein is Peptidyl-prolyl cis-trans isomerase FKBP8 (Fkbp8).